The chain runs to 199 residues: Probable molybdenum cofactor guanylyltransferase (199 aa).

GTP is bound by residues 8–10 (LAG), Lys20, Asp65, and Asp96. Mg(2+) is bound at residue Asp96.

Belongs to the MobA family. Mg(2+) is required as a cofactor.

It is found in the cytoplasm. It carries out the reaction Mo-molybdopterin + GTP + H(+) = Mo-molybdopterin guanine dinucleotide + diphosphate. Functionally, transfers a GMP moiety from GTP to Mo-molybdopterin (Mo-MPT) cofactor (Moco or molybdenum cofactor) to form Mo-molybdopterin guanine dinucleotide (Mo-MGD) cofactor. The chain is Probable molybdenum cofactor guanylyltransferase from Bacillus subtilis (strain 168).